We begin with the raw amino-acid sequence, 219 residues long: Orotate phosphoribosyltransferase (219 aa).

Lysine 26 contributes to the 5-phospho-alpha-D-ribose 1-diphosphate binding site. Orotate is bound at residue 34–35 (FF). 5-phospho-alpha-D-ribose 1-diphosphate-binding positions include 72 to 73 (YK), arginine 98, lysine 99, lysine 102, histidine 104, and 124 to 132 (DDVITAGTA). The orotate site is built by threonine 128 and arginine 156.

This sequence belongs to the purine/pyrimidine phosphoribosyltransferase family. PyrE subfamily. As to quaternary structure, homodimer. It depends on Mg(2+) as a cofactor.

It catalyses the reaction orotidine 5'-phosphate + diphosphate = orotate + 5-phospho-alpha-D-ribose 1-diphosphate. It functions in the pathway pyrimidine metabolism; UMP biosynthesis via de novo pathway; UMP from orotate: step 1/2. In terms of biological role, catalyzes the transfer of a ribosyl phosphate group from 5-phosphoribose 1-diphosphate to orotate, leading to the formation of orotidine monophosphate (OMP). The sequence is that of Orotate phosphoribosyltransferase from Xanthomonas axonopodis pv. citri (strain 306).